A 227-amino-acid polypeptide reads, in one-letter code: Ribose-5-phosphate isomerase A (227 aa).

Substrate contacts are provided by residues 26-29 (TGST), 82-85 (DGAD), and 95-98 (KGGG). Residue Glu104 is the Proton acceptor of the active site. Lys122 is a binding site for substrate.

The protein belongs to the ribose 5-phosphate isomerase family. In terms of assembly, homodimer.

It carries out the reaction aldehydo-D-ribose 5-phosphate = D-ribulose 5-phosphate. The protein operates within carbohydrate degradation; pentose phosphate pathway; D-ribose 5-phosphate from D-ribulose 5-phosphate (non-oxidative stage): step 1/1. Its function is as follows. Catalyzes the reversible conversion of ribose-5-phosphate to ribulose 5-phosphate. The polypeptide is Ribose-5-phosphate isomerase A (Streptococcus equi subsp. zooepidemicus (strain MGCS10565)).